Here is a 488-residue protein sequence, read N- to C-terminus: Transmembrane protein 39A (488 aa).

Residues Asn-31 and Asn-39 are each glycosylated (N-linked (GlcNAc...) asparagine). 8 helical membrane-spanning segments follow: residues 72–92, 110–130, 154–174, 182–202, 287–307, 319–339, 420–440, and 446–466; these read SLLF…IQYI, TSLN…VMLA, VLIS…CWTL, SVLN…LCCF, EVLF…LCFV, CEHL…QLLP, LLNL…YSLL, and NHTL…FKLL.

It belongs to the TMEM39 family. Interacts with SACM1L, SEC23A and SEC24A. In terms of assembly, (Microbial infection) Interacts with encephalomyocarditis virus (EMCV) major capsid proteins VP1 and VP2. Up-regulated in brain tumor glioblastoma multiforme cells (at protein level).

It is found in the endoplasmic reticulum membrane. Regulates autophagy by controlling the spatial distribution and levels of the intracellular phosphatidylinositol 4-phosphate (PtdIns(4)P) pools. Modulates (PtdIns(4)P) levels by regulating the ER-to-Golgi trafficking of the phosphatidylinositide phosphatase SACM1L. In terms of biological role, (Microbial infection) Positively regulates the replication of encephalomyocarditis virus (EMCV) via autophagy-dependent pathway. This chain is Transmembrane protein 39A (TMEM39A), found in Homo sapiens (Human).